The sequence spans 429 residues: Antho-RFamide neuropeptides type 2 (429 aa).

The N-terminal stretch at 1–22 (MTTVSYVTILLTVLVQVLTSDA) is a signal peptide. Residues 23 to 233 (KATNNKRELS…EFQGRFGRED (211 aa)) constitute a propeptide that is removed on maturation. The segment covering 230-371 (GREDQGRFGR…EDIAKEDQGR (142 aa)) has biased composition (basic and acidic residues). Positions 230–429 (GREDQGRFGR…KSDDALAKIS (200 aa)) are disordered. Residue Gln-234 is modified to Pyrrolidone carboxylic acid. Phe-237 is modified (phenylalanine amide). Positions 239-241 (RED) are excised as a propeptide. Position 242 is a pyrrolidone carboxylic acid (Gln-242). Phe-245 carries the phenylalanine amide modification. A propeptide spanning residues 247–249 (RED) is cleaved from the precursor. A Pyrrolidone carboxylic acid modification is found at Gln-250. Phenylalanine amide is present on Phe-253. Residues 255-257 (RED) constitute a propeptide that is removed on maturation. Position 258 is a pyrrolidone carboxylic acid (Gln-258). The residue at position 261 (Phe-261) is a Phenylalanine amide. A propeptide spanning residues 263–265 (RED) is cleaved from the precursor. Residue Gln-266 is modified to Pyrrolidone carboxylic acid. Phenylalanine amide is present on Phe-269. Residues 271 to 273 (RED) constitute a propeptide that is removed on maturation. At Gln-274 the chain carries Pyrrolidone carboxylic acid. Phe-277 bears the Phenylalanine amide mark. Positions 279–289 (RELQGRFGRED) are excised as a propeptide. Residue Gln-290 is modified to Pyrrolidone carboxylic acid. Phe-293 carries the phenylalanine amide modification. Residues 295–297 (RED) constitute a propeptide that is removed on maturation. Gln-298 bears the Pyrrolidone carboxylic acid mark. Phe-301 bears the Phenylalanine amide mark. The propeptide occupies 303 to 305 (RED). Pyrrolidone carboxylic acid is present on Gln-306. Phe-309 carries the phenylalanine amide modification. Positions 311–321 (RELQGRFGRED) are excised as a propeptide. Gln-322 carries the post-translational modification Pyrrolidone carboxylic acid. Phenylalanine amide is present on Phe-325. Residues 327 to 329 (RED) constitute a propeptide that is removed on maturation. At Gln-330 the chain carries Pyrrolidone carboxylic acid. Phe-333 carries the phenylalanine amide modification. A propeptide spanning residues 335–342 (REDLAKED) is cleaved from the precursor. Gln-343 carries the pyrrolidone carboxylic acid modification. The residue at position 346 (Phe-346) is a Phenylalanine amide. A propeptide spanning residues 348–355 (REDLAKED) is cleaved from the precursor. Position 356 is a pyrrolidone carboxylic acid (Gln-356). Position 359 is a phenylalanine amide (Phe-359). Residues 361–368 (REDIAKED) constitute a propeptide that is removed on maturation. Gln-369 carries the post-translational modification Pyrrolidone carboxylic acid. Phe-372 is modified (phenylalanine amide). The propeptide occupies 374–429 (RNAAAAAKKRTIDVIDIESDPKPQTRFRDGKDMQEKRKVEKKDKIEKSDDALAKIS). The span at 392-429 (SDPKPQTRFRDGKDMQEKRKVEKKDKIEKSDDALAKIS) shows a compositional bias: basic and acidic residues.

This sequence belongs to the FARP (FMRFamide related peptide) family.

Its subcellular location is the secreted. Functionally, not known but it could act as a transmitter at neuromuscular synapses. This Anthopleura elegantissima (Green aggregating anemone) protein is Antho-RFamide neuropeptides type 2.